A 383-amino-acid chain; its full sequence is Delta(12) acyl-lipid conjugase (11E,13E-forming) (383 aa).

A disordered region spans residues 1-30 (MGEVGPTNRTKTKLDKQQESENRVPHEPPP). Residues 12–26 (TKLDKQQESENRVPH) show a composition bias toward basic and acidic residues. The next 2 helical transmembrane spans lie at 56–76 (VIHD…YIPM) and 84–104 (VAWP…LVLG). The Histidine box-1 motif lies at 105–109 (HECGH). The Histidine box-2 motif lies at 141–145 (HRRHH). Transmembrane regions (helical) follow at residues 179-199 (FLMI…FNAN), 225-245 (VIAS…IALA), and 249-269 (VWLI…IVLI). Positions 315-319 (HLVHH) match the Histidine box-3 motif.

It belongs to the fatty acid desaturase type 1 family. As to expression, expressed in developing seeds, but not in leaves.

It localises to the membrane. It carries out the reaction a (9Z,12Z)-octadecadienoyl-containing glycerolipid + 2 Fe(II)-[cytochrome b5] + O2 + 2 H(+) = a (9Z,11E,13E)-octadecatrienoyl-containing glycerolipid + 2 Fe(III)-[cytochrome b5] + 2 H2O. It catalyses the reaction (9Z,12Z,15Z)-octadecatrienoyl-containing glycerolipid + 2 Fe(II)-[cytochrome b5] + O2 + 2 H(+) = a (9Z,11E,13E,15Z)-octadecatetraenoyl-containing glycerolipid + 2 Fe(III)-[cytochrome b5] + 2 H2O. It functions in the pathway lipid metabolism; polyunsaturated fatty acid biosynthesis. Converts linoleic acid to alpha-eleostearic acid (18:3(9Z,11E,13E)) and alpha-linolenic acid to alpha-parinaric acid (18:4(9Z,11E, 13E, 15Z)). Converts a single cis double bond at carbon 12 to two conjugated trans bonds at positions 11 and 13. In Impatiens balsamina (Balsam), this protein is Delta(12) acyl-lipid conjugase (11E,13E-forming).